Consider the following 183-residue polypeptide: Protein jagunal homolog 1 (183 aa).

The Cytoplasmic segment spans residues 1–39 (MASRAGPRAAGTDGSDFQHRERVAMHYQMSVTLKYEIKK). Ser3 carries the post-translational modification Phosphoserine. A helical membrane pass occupies residues 40–60 (LIYVHLVIWLLLVAKMSVGHL). Residues 61–71 (RLLSHDQVAMP) are Lumenal-facing. A helical membrane pass occupies residues 72-92 (YQWEYPYLLSIVPSVLGLLSF). Topologically, residues 93 to 96 (PRNN) are cytoplasmic. The helical transmembrane segment at 97 to 117 (ISYLVLSMISMGLFSIAPLIY) threads the bilayer. The Lumenal segment spans residues 118–137 (GSMEMFPAAQQLYRHGKAYR). A helical transmembrane segment spans residues 138-158 (FLFGFSAVSVMYLVLVLAVQV). Topologically, residues 159-183 (HAWQLYYSKKLLDSWFTSTQEKKRK) are cytoplasmic.

This sequence belongs to the jagunal family. In terms of assembly, interacts with COPA, COPB2 and COPG2.

The protein localises to the endoplasmic reticulum membrane. In terms of biological role, endoplasmic reticulum transmembrane protein involved in vesicle-mediated transport, which is required for neutrophil function. Required for vesicle-mediated transport; it is however unclear whether it is involved in early secretory pathway or intracellular protein transport. Acts as a regulator of neutrophil function, probably via its role in vesicle-mediated transport: required for defense against fungal pathogens and for granulocyte colony-stimulating factor (GM-CSF) signaling pathway; possibly by regulating glycosylation and/or targeting of proteins contributing to the viability and migration of neutrophils. This Mus musculus (Mouse) protein is Protein jagunal homolog 1.